The following is a 468-amino-acid chain: Charged multivesicular body protein 7 (468 aa).

Coiled-coil stretches lie at residues 233 to 303 and 353 to 379; these read EKLL…AETD and VSDA…MIVD. A disordered region spans residues 428–468; it reads DVPSGPVVISPQRPTEWKTDQASRSPADGSFSRSVPEPVLQ.

Belongs to the SNF7 family.

Its subcellular location is the cytoplasm. The protein localises to the nucleus envelope. ESCRT-III-like protein required to recruit the ESCRT-III complex to the nuclear envelope during late anaphase. Together with SPAST, the ESCRT-III complex promotes nuclear envelope sealing and mitotic spindle disassembly during late anaphase. Plays a role in the endosomal sorting pathway. The polypeptide is Charged multivesicular body protein 7 (chmp7) (Xenopus tropicalis (Western clawed frog)).